We begin with the raw amino-acid sequence, 313 residues long: Olfactory receptor 51A2 (313 aa).

Topologically, residues 1 to 27 (MSIINTSYVEITTFFLVGMPGLEYAHI) are extracellular. Asn-5 is a glycosylation site (N-linked (GlcNAc...) asparagine). Residues 28–48 (WISIPICSMYLIAILGNGTIL) form a helical membrane-spanning segment. At 49–56 (FIIKTEPS) the chain is on the cytoplasmic side. A helical transmembrane segment spans residues 57-77 (LHGPMYYFLSMLAMSDLGLSL). Residues 78–101 (SSLPTVLSIFLFNAPETSSSACFA) lie on the Extracellular side of the membrane. A disulfide bond links Cys-99 and Cys-191. Residues 102-122 (QEFFIHGFSVLESSVLLIMSF) form a helical membrane-spanning segment. Topologically, residues 123–141 (DRFLAIHNPLRYTSILTTV) are cytoplasmic. The chain crosses the membrane as a helical span at residues 142 to 162 (RVAQIGIVFSFKSMLLVLPFP). Residues 163-198 (FTLRSLRYCKKNQLSHSYCLHQDVMKLACSDNRIDV) are Extracellular-facing. Residues 199–218 (IYGFFGALCLMVDFILIAVS) traverse the membrane as a helical segment. The Cytoplasmic portion of the chain corresponds to 219–238 (YTLILKTVPGIASKKEELKA). A helical membrane pass occupies residues 239–259 (LNTCVSHICAVIIFYLPIINL). Residues 260-274 (AVVHRFAGHVSPLIN) lie on the Extracellular side of the membrane. Residues 275–295 (VLMANVLLLVPPLMKPIVYCV) traverse the membrane as a helical segment. Residues 296 to 313 (KTKQIRVRVVAKLCQWKI) lie on the Cytoplasmic side of the membrane.

This sequence belongs to the G-protein coupled receptor 1 family.

It localises to the cell membrane. In terms of biological role, odorant receptor. This Homo sapiens (Human) protein is Olfactory receptor 51A2 (OR51A2).